Reading from the N-terminus, the 330-residue chain is tRNA U34 carboxymethyltransferase (330 aa).

Carboxy-S-adenosyl-L-methionine is bound by residues Lys91, Trp105, Lys110, Gly130, 152 to 154, 181 to 182, Met196, Tyr200, and Arg315; these read DPS and IE.

Belongs to the class I-like SAM-binding methyltransferase superfamily. CmoB family. Homotetramer.

It catalyses the reaction carboxy-S-adenosyl-L-methionine + 5-hydroxyuridine(34) in tRNA = 5-carboxymethoxyuridine(34) in tRNA + S-adenosyl-L-homocysteine + H(+). In terms of biological role, catalyzes carboxymethyl transfer from carboxy-S-adenosyl-L-methionine (Cx-SAM) to 5-hydroxyuridine (ho5U) to form 5-carboxymethoxyuridine (cmo5U) at position 34 in tRNAs. This chain is tRNA U34 carboxymethyltransferase, found in Shewanella loihica (strain ATCC BAA-1088 / PV-4).